The sequence spans 151 residues: UPF0735 ACT domain-containing protein SH1278 (151 aa).

In terms of domain architecture, ACT spans T74–M149.

It belongs to the UPF0735 family.

The chain is UPF0735 ACT domain-containing protein SH1278 from Staphylococcus haemolyticus (strain JCSC1435).